Reading from the N-terminus, the 176-residue chain is Shikimate kinase (176 aa).

Position 14 to 19 (14 to 19 (GAGKST)) interacts with ATP. Serine 18 contributes to the Mg(2+) binding site. Residues aspartate 36, arginine 60, and glycine 83 each contribute to the substrate site. Residue arginine 121 participates in ATP binding. Residue arginine 140 participates in substrate binding.

It belongs to the shikimate kinase family. In terms of assembly, monomer. Requires Mg(2+) as cofactor.

It localises to the cytoplasm. The catalysed reaction is shikimate + ATP = 3-phosphoshikimate + ADP + H(+). Its pathway is metabolic intermediate biosynthesis; chorismate biosynthesis; chorismate from D-erythrose 4-phosphate and phosphoenolpyruvate: step 5/7. Catalyzes the specific phosphorylation of the 3-hydroxyl group of shikimic acid using ATP as a cosubstrate. The polypeptide is Shikimate kinase (Francisella philomiragia subsp. philomiragia (strain ATCC 25017 / CCUG 19701 / FSC 153 / O#319-036)).